A 152-amino-acid chain; its full sequence is Small ribosomal subunit protein bS16 (152 aa).

The segment covering 118-130 (AEKHKAKASEKKA) has biased composition (basic and acidic residues). The disordered stretch occupies residues 118 to 152 (AEKHKAKASEKKAAAAASADEAGSAAADDAEGSES). The span at 131-144 (AAAASADEAGSAAA) shows a compositional bias: low complexity.

It belongs to the bacterial ribosomal protein bS16 family.

This chain is Small ribosomal subunit protein bS16, found in Beutenbergia cavernae (strain ATCC BAA-8 / DSM 12333 / CCUG 43141 / JCM 11478 / NBRC 16432 / NCIMB 13614 / HKI 0122).